The chain runs to 464 residues: tRNA modification GTPase MnmE (464 aa).

Residues Arg-25, Glu-87, and Lys-130 each coordinate (6S)-5-formyl-5,6,7,8-tetrahydrofolate. The TrmE-type G domain occupies 226–386; the sequence is GLSVVLAGQP…LRAELLRIAG (161 aa). A K(+)-binding site is contributed by Asn-236. GTP is bound by residues 236 to 241, 255 to 261, and 280 to 283; these read NVGKSS, TPIAGTT, and DTAG. Position 240 (Ser-240) interacts with Mg(2+). Positions 255, 257, and 260 each coordinate K(+). Thr-261 contributes to the Mg(2+) binding site. Lys-464 contributes to the (6S)-5-formyl-5,6,7,8-tetrahydrofolate binding site.

The protein belongs to the TRAFAC class TrmE-Era-EngA-EngB-Septin-like GTPase superfamily. TrmE GTPase family. Homodimer. Heterotetramer of two MnmE and two MnmG subunits. Requires K(+) as cofactor.

The protein resides in the cytoplasm. Its function is as follows. Exhibits a very high intrinsic GTPase hydrolysis rate. Involved in the addition of a carboxymethylaminomethyl (cmnm) group at the wobble position (U34) of certain tRNAs, forming tRNA-cmnm(5)s(2)U34. The chain is tRNA modification GTPase MnmE from Burkholderia ambifaria (strain MC40-6).